Consider the following 126-residue polypeptide: Alpha-lactalbumin (126 aa).

Residues 1–126 enclose the C-type lysozyme domain; that stretch reads RIFQICELSR…CNSDLDQWKC (126 aa). Intrachain disulfides connect Cys6–Cys126, Cys30–Cys117, Cys63–Cys82, and Cys78–Cys96. A glycan (N-linked (GlcNAc...) asparagine) is linked at Asn47. Ca(2+)-binding residues include Lys84, Asp87, Asp89, Asp92, and Asp93.

It belongs to the glycosyl hydrolase 22 family. In terms of assembly, lactose synthase (LS) is a heterodimer of a catalytic component, beta1,4-galactosyltransferase (beta4Gal-T1) and a regulatory component, alpha-lactalbumin (LA). Mammary gland specific. Secreted in milk.

It is found in the secreted. Regulatory subunit of lactose synthase, changes the substrate specificity of galactosyltransferase in the mammary gland making glucose a good acceptor substrate for this enzyme. This enables LS to synthesize lactose, the major carbohydrate component of milk. In other tissues, galactosyltransferase transfers galactose onto the N-acetylglucosamine of the oligosaccharide chains in glycoproteins. The sequence is that of Alpha-lactalbumin (LALBA) from Ornithorhynchus anatinus (Duckbill platypus).